The chain runs to 190 residues: MSVQIKHGNKTFVVDPSGDVKEGSYVLYLYEYRLGEVDVGRVSEVANDGRLYLDGPGVIVTLDQPFILLKEVVEEEEDEDDRIDAEFHNDPLLRKLENTTEKLTPEETQLAQWTTMTRVFSHDLKKGIPYAIKHKNSGNILYGLYSGLLNPVTALFRHLNEESKISIEQLKSGLIEIYEVVEDEEESIWN.

In Bacillus subtilis (Bacteriophage SP01), this protein is Putative gene 38 protein (38).